We begin with the raw amino-acid sequence, 200 residues long: MSGFASQIPSMALLGSGLTGEVGLRVLFSPLSSNIVLRTACCSIGIGLPVYSTFKAIESGDENEQQKMLIYWAAYGSFSLVEVFTDKIISWFPLYYHVKFAFLVWLQLPTVEGSKQIYNNQIRPFLLRHQARVDQLVDGVYGEMVKVVRSHQGEIRFVRAMIAKILGSVNEDAPRLGEIANGSPVSETNSDSESDSNHED.

Residues 176-200 (LGEIANGSPVSETNSDSESDSNHED) form a disordered region.

The protein belongs to the DP1 family.

This is HVA22-like protein k (HVA22K) from Arabidopsis thaliana (Mouse-ear cress).